Consider the following 142-residue polypeptide: uncharacterized protein (142 aa).

One can recognise an N-acetyltransferase domain in the interval methionine 1–aspartate 120.

The protein belongs to the acetyltransferase family.

This is an uncharacterized protein from Streptococcus pyogenes serotype M1.